The primary structure comprises 427 residues: Mitochondrial distribution and morphology protein 12 (427 aa).

Positions 1–387 (MSFDINWNQL…WPSWICIDMN (387 aa)) constitute an SMP-LTD domain. A compositionally biased stretch (basic and acidic residues) spans 81-96 (NDSKDEHLKNHGDGIN). Disordered stretches follow at residues 81-168 (NDSK…APPL) and 387-427 (NDDD…EAGE). Acidic residues predominate over residues 106-133 (LDDEDEDDEDDDEDDEDEEEEDEDDYDD). Polar residues predominate over residues 146-161 (LNFNENSTTPSANSFA). Residues 387–402 (NDDDDEEEEEESEDND) are compositionally biased toward acidic residues. Positions 411–427 (NDGKHGDGRTDETEAGE) are enriched in basic and acidic residues.

This sequence belongs to the MDM12 family. In terms of assembly, component of the ER-mitochondria encounter structure (ERMES) or MDM complex, composed of MMM1, MDM10, MDM12 and MDM34. An MMM1 homodimer associates with one molecule of MDM12 on each side in a pairwise head-to-tail manner, and the SMP-LTD domains of MMM1 and MDM12 generate a continuous hydrophobic tunnel for phospholipid trafficking.

It localises to the mitochondrion outer membrane. It is found in the endoplasmic reticulum membrane. Its function is as follows. Component of the ERMES/MDM complex, which serves as a molecular tether to connect the endoplasmic reticulum (ER) and mitochondria. Components of this complex are involved in the control of mitochondrial shape and protein biogenesis, and function in nonvesicular lipid trafficking between the ER and mitochondria. MDM12 is required for the interaction of the ER-resident membrane protein MMM1 and the outer mitochondrial membrane-resident beta-barrel protein MDM10. The MDM12-MMM1 subcomplex functions in the major beta-barrel assembly pathway that is responsible for biogenesis of all mitochondrial outer membrane beta-barrel proteins, and acts in a late step after the SAM complex. The MDM10-MDM12-MMM1 subcomplex further acts in the TOM40-specific pathway after the action of the MDM12-MMM1 complex. Essential for establishing and maintaining the structure of mitochondria and maintenance of mtDNA nucleoids. This is Mitochondrial distribution and morphology protein 12 from Candida albicans (strain WO-1) (Yeast).